A 182-amino-acid chain; its full sequence is Peptidoglycan L,D-endopeptidase MepK (182 aa).

Positions 1 to 30 (MDKFDANRRKLLALGGVALGAAILPTPAFA) form a signal peptide, tat-type signal. Zn(2+) contacts are provided by histidine 133, aspartate 140, and histidine 173.

Belongs to the peptidase M15 family. Zn(2+) is required as a cofactor. In terms of processing, predicted to be exported by the Tat system. The position of the signal peptide cleavage has not been experimentally proven.

It functions in the pathway cell wall biogenesis; cell wall polysaccharide biosynthesis. Functionally, l,D-endopeptidase that cleaves meso-diaminopimelic acid (mDAP)-mDAP cross-links in peptidoglycan. It works in conjunction with other elongation-specific D,D-endopeptidases to make space for efficient incorporation of nascent peptidoglycan strands into the sacculus and thus enable cell wall expansion. The chain is Peptidoglycan L,D-endopeptidase MepK from Escherichia coli O157:H7.